Here is a 289-residue protein sequence, read N- to C-terminus: Alpha-soluble NSF attachment protein (289 aa).

Residues 112 to 145 (GKYYKEIAELYELEQNFEQAIIYFEKAADIYQSE) form a TPR repeat.

It belongs to the SNAP family.

The protein localises to the membrane. In terms of biological role, required for vesicular transport between the endoplasmic reticulum and the Golgi apparatus. This is Alpha-soluble NSF attachment protein from Vitis vinifera (Grape).